Consider the following 375-residue polypeptide: Anhydro-N-acetylmuramic acid kinase (375 aa).

Residue glycine 12–aspartate 19 participates in ATP binding.

Belongs to the anhydro-N-acetylmuramic acid kinase family.

The enzyme catalyses 1,6-anhydro-N-acetyl-beta-muramate + ATP + H2O = N-acetyl-D-muramate 6-phosphate + ADP + H(+). Its pathway is amino-sugar metabolism; 1,6-anhydro-N-acetylmuramate degradation. It participates in cell wall biogenesis; peptidoglycan recycling. Functionally, catalyzes the specific phosphorylation of 1,6-anhydro-N-acetylmuramic acid (anhMurNAc) with the simultaneous cleavage of the 1,6-anhydro ring, generating MurNAc-6-P. Is required for the utilization of anhMurNAc either imported from the medium or derived from its own cell wall murein, and thus plays a role in cell wall recycling. The polypeptide is Anhydro-N-acetylmuramic acid kinase (Mannheimia succiniciproducens (strain KCTC 0769BP / MBEL55E)).